The primary structure comprises 480 residues: tRNA-2-methylthio-N(6)-dimethylallyladenosine synthase (480 aa).

In terms of domain architecture, MTTase N-terminal spans 43–161; it reads KLYCLNTFGC…FPELLYSAMD (119 aa). [4Fe-4S] cluster contacts are provided by Cys-52, Cys-88, Cys-122, Cys-198, Cys-202, and Cys-205. One can recognise a Radical SAM core domain in the interval 184–414; the sequence is RKDGVKAWVT…LETQNRISKE (231 aa). The region spanning 417–480 is the TRAM domain; the sequence is DTFLGKVVEV…TWSLEGSIVR (64 aa).

It belongs to the methylthiotransferase family. MiaB subfamily. As to quaternary structure, monomer. [4Fe-4S] cluster is required as a cofactor.

It localises to the cytoplasm. The enzyme catalyses N(6)-dimethylallyladenosine(37) in tRNA + (sulfur carrier)-SH + AH2 + 2 S-adenosyl-L-methionine = 2-methylsulfanyl-N(6)-dimethylallyladenosine(37) in tRNA + (sulfur carrier)-H + 5'-deoxyadenosine + L-methionine + A + S-adenosyl-L-homocysteine + 2 H(+). Functionally, catalyzes the methylthiolation of N6-(dimethylallyl)adenosine (i(6)A), leading to the formation of 2-methylthio-N6-(dimethylallyl)adenosine (ms(2)i(6)A) at position 37 in tRNAs that read codons beginning with uridine. The sequence is that of tRNA-2-methylthio-N(6)-dimethylallyladenosine synthase from Acetivibrio thermocellus (strain ATCC 27405 / DSM 1237 / JCM 9322 / NBRC 103400 / NCIMB 10682 / NRRL B-4536 / VPI 7372) (Clostridium thermocellum).